The sequence spans 222 residues: 4'-phosphopantetheinyl transferase Npt (222 aa).

Positions 105, 107, and 147 each coordinate Mg(2+).

The protein belongs to the P-Pant transferase superfamily. As to quaternary structure, monomer. The cofactor is Mg(2+).

The enzyme catalyses apo-[ACP] + CoA = holo-[ACP] + adenosine 3',5'-bisphosphate + H(+). Functionally, catalyzes the transfer of the 4'-phosphopantetheine moiety from coenzyme A to a serine residue in the acyl-carrier domain of carboxylic acid reductase Car, thus converting apo-Car to fully active holo-Car. Is probably also responsible for the activation of other proteins with phosphopantetheine attachment sites. The chain is 4'-phosphopantetheinyl transferase Npt (npt) from Nocardia iowensis.